The chain runs to 315 residues: Ribosome biogenesis protein BRX1 homolog 1 (315 aa).

A disordered region spans residues 1–35 (MGRKRKHSETVTAAPVKDSAPERPQRTLLGWKDKK). Over residues 19–35 (SAPERPQRTLLGWKDKK) the composition is skewed to basic and acidic residues. A Brix domain is found at 53–256 (EKVLVTCSRR…PIKIFGGSFG (204 aa)).

The protein belongs to the BRX1 family. Expressed in roots, rosette leaves, stems, flowers, siliques and seeds.

Its subcellular location is the nucleus. It is found in the nucleolus. Its function is as follows. Involved in pre-rRNA processing and required for biogenesis of the large (60S) ribosomal subunit. Required for proper development. This is Ribosome biogenesis protein BRX1 homolog 1 from Arabidopsis thaliana (Mouse-ear cress).